The primary structure comprises 551 residues: MSGTKYIFVTGGVVSSIGKGTSAAALGMLLKSRGYRVVLQKFDPYINVDPGTMNPYQHGEVFVTEDGAETDLDLGHYERFLDENLGRLSNVTTGSVYWEVISRERRGDYLGATVQVIPHITNEIKARIGRLGREKDVVITEIGGTVGDIESQPFLEAIRQFRNDVGRKNVLYVHVSYVPYIEAAGELKTKPTQHSTQRLREMGISPDILICRADRPIGEEIRRKIALFGDVEVDSVIPAQDAPTLYDIPLSLHGSGLDALVLEKLGLPAPPARLEEWRGLVRRLHGAEREVRVAVIGKYIRLQDAYLSVVEALRHAGGAHEVRVELDWVDSEQISDPEAARERLRGADGVLVLHGFGQRGIEGKIEAARYARESGTPYLGLCLGMQIAVIEFARNVAGLEMANSTEFDEETPHPVIDIMPDQVGVEMGGTMRLGSYPCRLRPGTLAARVYGAEVVHERHRHRYEVNNAYREVLEEAGMVFSGTSPDGRLVEIAELAGHPFFIGSQFHPEFKSRPLRPHPLFRGFVGACLGAAEEAGRVTAPAAGRKDGASG.

The interval 1–267 (MSGTKYIFVT…DALVLEKLGL (267 aa)) is amidoligase domain. S15 lines the CTP pocket. Residue S15 coordinates UTP. 16 to 21 (SIGKGT) is a binding site for ATP. Y56 serves as a coordination point for L-glutamine. D73 provides a ligand contact to ATP. The Mg(2+) site is built by D73 and E141. CTP contacts are provided by residues 148 to 150 (DIE), 188 to 193 (KTKPTQ), and K224. Residues 188–193 (KTKPTQ) and K224 each bind UTP. One can recognise a Glutamine amidotransferase type-1 domain in the interval 292–534 (RVAVIGKYIR…VGACLGAAEE (243 aa)). Residue G355 participates in L-glutamine binding. The active-site Nucleophile; for glutamine hydrolysis is C382. L-glutamine contacts are provided by residues 383–386 (LGMQ), E406, and R462. Active-site residues include H507 and E509.

Belongs to the CTP synthase family. Homotetramer.

The enzyme catalyses UTP + L-glutamine + ATP + H2O = CTP + L-glutamate + ADP + phosphate + 2 H(+). It carries out the reaction L-glutamine + H2O = L-glutamate + NH4(+). It catalyses the reaction UTP + NH4(+) + ATP = CTP + ADP + phosphate + 2 H(+). It functions in the pathway pyrimidine metabolism; CTP biosynthesis via de novo pathway; CTP from UDP: step 2/2. With respect to regulation, allosterically activated by GTP, when glutamine is the substrate; GTP has no effect on the reaction when ammonia is the substrate. The allosteric effector GTP functions by stabilizing the protein conformation that binds the tetrahedral intermediate(s) formed during glutamine hydrolysis. Inhibited by the product CTP, via allosteric rather than competitive inhibition. Catalyzes the ATP-dependent amination of UTP to CTP with either L-glutamine or ammonia as the source of nitrogen. Regulates intracellular CTP levels through interactions with the four ribonucleotide triphosphates. The sequence is that of CTP synthase from Rubrobacter xylanophilus (strain DSM 9941 / JCM 11954 / NBRC 16129 / PRD-1).